The primary structure comprises 217 residues: Ras-related protein Rab-19 (217 aa).

GTP-binding residues include Ser26, Val28, Gly29, Lys30, Thr31, Cys32, Tyr42, Thr43, Glu44, Thr45, and Thr49. Mg(2+) is bound at residue Thr31. A Switch 1 motif is present at residues 39–54 (SGVYTETQQNTIGVDF). The Mg(2+) site is built by Thr49 and Asp72. Residues 74 to 89 (AGQERFRTITQSYYRS) carry the Switch 2 motif. The GTP site is built by Gly75, Asn130, Lys131, Asp133, Ser161, Ala162, and Lys163. Residues Cys215 and Cys217 are each lipidated (S-geranylgeranyl cysteine). Cys217 is modified (cysteine methyl ester).

This sequence belongs to the small GTPase superfamily. Rab family. Mg(2+) is required as a cofactor.

It localises to the cell membrane. It carries out the reaction GTP + H2O = GDP + phosphate + H(+). With respect to regulation, regulated by guanine nucleotide exchange factors (GEFs) which promote the exchange of bound GDP for free GTP. Regulated by GTPase activating proteins (GAPs) which increase the GTP hydrolysis activity. Inhibited by GDP dissociation inhibitors (GDIs). The small GTPases Rab are key regulators of intracellular membrane trafficking, from the formation of transport vesicles to their fusion with membranes. Rabs cycle between an inactive GDP-bound form and an active GTP-bound form that is able to recruit to membranes different set of downstream effectors directly responsible for vesicle formation, movement, tethering and fusion. In Homo sapiens (Human), this protein is Ras-related protein Rab-19.